The following is a 345-amino-acid chain: Phosphoribosylformylglycinamidine cyclo-ligase (345 aa).

This sequence belongs to the AIR synthase family.

It is found in the cytoplasm. The enzyme catalyses 2-formamido-N(1)-(5-O-phospho-beta-D-ribosyl)acetamidine + ATP = 5-amino-1-(5-phospho-beta-D-ribosyl)imidazole + ADP + phosphate + H(+). It functions in the pathway purine metabolism; IMP biosynthesis via de novo pathway; 5-amino-1-(5-phospho-D-ribosyl)imidazole from N(2)-formyl-N(1)-(5-phospho-D-ribosyl)glycinamide: step 2/2. In Staphylococcus carnosus (strain TM300), this protein is Phosphoribosylformylglycinamidine cyclo-ligase.